A 33-amino-acid chain; its full sequence is PRRRRETSRPIRRRRRARRAPIRRRRRVVRRRR.

The segment at 1–33 is disordered; the sequence is PRRRRETSRPIRRRRRARRAPIRRRRRVVRRRR.

Testis.

It localises to the nucleus. The protein localises to the chromosome. In terms of biological role, protamines substitute for histones in the chromatin of sperm during the haploid phase of spermatogenesis. They compact sperm DNA into a highly condensed, stable and inactive complex. In Mugil cephalus (Flathead mullet), this protein is Protamine-M6/M7.